A 55-amino-acid chain; its full sequence is ATP synthase protein 8 (55 aa).

The chain crosses the membrane as a helical span at residues 8–28 (WWIVNFSLIWASVLIVISLLL). Residues 34-55 (NSAGQSSSSLTLNKTTTNWQWL) are disordered. The span at 39–55 (SSSSLTLNKTTTNWQWL) shows a compositional bias: low complexity.

This sequence belongs to the ATPase protein 8 family. F-type ATPases have 2 components, CF(1) - the catalytic core - and CF(0) - the membrane proton channel.

It localises to the mitochondrion membrane. Mitochondrial membrane ATP synthase (F(1)F(0) ATP synthase or Complex V) produces ATP from ADP in the presence of a proton gradient across the membrane which is generated by electron transport complexes of the respiratory chain. F-type ATPases consist of two structural domains, F(1) - containing the extramembraneous catalytic core and F(0) - containing the membrane proton channel, linked together by a central stalk and a peripheral stalk. During catalysis, ATP synthesis in the catalytic domain of F(1) is coupled via a rotary mechanism of the central stalk subunits to proton translocation. Part of the complex F(0) domain. Minor subunit located with subunit a in the membrane. In Strongylocentrotus purpuratus (Purple sea urchin), this protein is ATP synthase protein 8 (MT-ATP8).